The following is a 63-amino-acid chain: Alpha-conotoxin-like Am1.6 (63 aa).

The signal sequence occupies residues 1-21 (MGMRMMFTVFLLVVLATTVVS). Positions 22 to 46 (FTSYRASDGRNAAAKASDLIALTVR) are excised as a propeptide. Residues 50–52 (SRP) are ser-Xaa-Pro motif, crucial for potent interaction with nAChR.

It belongs to the conotoxin A superfamily. In terms of processing, is not hydroxylated. Contains 2 disulfide bonds. Expressed by the venom duct.

Its subcellular location is the secreted. Its function is as follows. Alpha-conotoxins act on postsynaptic membranes, they bind to the nicotinic acetylcholine receptors (nAChR) and thus inhibit them. The chain is Alpha-conotoxin-like Am1.6 from Conus amadis (Amadis cone).